A 129-amino-acid chain; its full sequence is Transcriptional activator protein (129 aa).

Low complexity predominate over residues 1–12 (MRSSSPSQPPSI). The segment at 1-23 (MRSSSPSQPPSIKKAHRQAKKRA) is disordered. Basic residues predominate over residues 13–23 (KKAHRQAKKRA). The Nuclear localization signal signature appears at 13-28 (KKAHRQAKKRAIRRRR). Residues 33–50 (CGCSIYFHIDCAGHGFTH) fold into a zinc finger. Residues 73–117 (LFQDKPSRGHAIHQDQDIQRPNPVQPQPQESIGSPQSIPELPSLD) form a disordered region. Over residues 99 to 109 (QPQESIGSPQS) the composition is skewed to polar residues. Residues 115–129 (SLDDIDDSFWVELFS) form a transactivation region.

Belongs to the geminiviridae transcriptional activator protein family. Monomer. Homodimer. Homooligomer. Self-interaction correlates with nuclear localization and efficient activation of transcription. Monomers suppress local silencing by interacting with and inactivating host adenosine kinase 2 (ADK2) in the cytoplasm. Interacts with and inhibits host SNF1 kinase. Binds to ssDNA. Post-translationally, phosphorylated.

It is found in the host nucleus. It localises to the host cytoplasm. Its function is as follows. Strong activator of the late viral genes promoters. Enhances the expression of the capsid protein and nuclear shuttle protein. Acts as a suppressor of RNA-mediated gene silencing, also known as post-transcriptional gene silencing (PTGS), a mechanism of plant viral defense that limits the accumulation of viral RNAs. Suppresses the host RNA silencing by inhibiting adenosine kinase 2 (ADK2), a kinase involved in a general methylation pathway. Also suppresses the host basal defense by interacting with and inhibiting SNF1 kinase, a key regulator of cell metabolism implicated in innate antiviral defense. Determines pathogenicity. In Solanum tuberosum (Potato), this protein is Transcriptional activator protein.